We begin with the raw amino-acid sequence, 206 residues long: MPTVALYNTNGEQVGELALKDEIFGVEVHEPVLHDAVVMHLANRRLGTHDTKTRSEVRGGGRKPWRQKGTGRARHGSIRSPLWRGGGIIFGPHPRDYSYSLPRKVRRLALKSALSAKVNSGDILVLDELKLDQPKTKEMARILNNLKVDDALLVTAEKDEAVERSARNIPNIKPVQAALLNVYDILAYDKLVMTRDAVARVEEVFA.

Basic and acidic residues predominate over residues 48 to 59 (THDTKTRSEVRG). The interval 48–77 (THDTKTRSEVRGGGRKPWRQKGTGRARHGS) is disordered. Residues 60 to 77 (GGRKPWRQKGTGRARHGS) show a composition bias toward basic residues.

It belongs to the universal ribosomal protein uL4 family. Part of the 50S ribosomal subunit.

Its function is as follows. One of the primary rRNA binding proteins, this protein initially binds near the 5'-end of the 23S rRNA. It is important during the early stages of 50S assembly. It makes multiple contacts with different domains of the 23S rRNA in the assembled 50S subunit and ribosome. In terms of biological role, forms part of the polypeptide exit tunnel. The sequence is that of Large ribosomal subunit protein uL4 from Pelotomaculum thermopropionicum (strain DSM 13744 / JCM 10971 / SI).